A 593-amino-acid polypeptide reads, in one-letter code: Developmental and secondary metabolism regulator VEL1 (593 aa).

Positions 1-16 are enriched in polar residues; sequence MSNIVVSNETKSQSVR. The disordered stretch occupies residues 1–21; the sequence is MSNIVVSNETKSQSVRTTKDG. One can recognise a Velvet domain in the interval 21-212; the sequence is GRQIRYNLQV…AEQGCRVRIR (192 aa). The short motif at 35 to 40 is the Nuclear localization signal element; the sequence is ERARAC. Residues 218 to 569 form a disordered region; sequence RRRENKSSKE…PGSPDMEEPM (352 aa). The span at 310–326 shows a compositional bias: low complexity; it reads PSYGSNQPQYSQQYQTP. The segment covering 327-340 has biased composition (pro residues); that stretch reads QPAPMMQPPQPPQH. Composition is skewed to low complexity over residues 341 to 360 and 367 to 389; these read STPY…HQAQ and QQYG…QPQY. 2 stretches are compositionally biased toward polar residues: residues 413 to 429 and 440 to 449; these read SSIT…SSHP and GRSQQMSQPL. The segment at 443-487 is PEST; sequence QQMSQPLHSSPQSYASSAPSHQSLPSLRPIVADKLEPVSPSYQSP. The span at 450–465 shows a compositional bias: low complexity; sequence HSSPQSYASSAPSHQS. Polar residues-rich tracts occupy residues 482–505 and 512–534; these read PSYQ…SNQH and NPQT…SSTF.

The protein belongs to the velvet family. VeA subfamily. Component of the heterotrimeric velvet complex composed of LAE1, VEL1 and VEL2; VEL1 acting as a bridging protein between LAE1 and VEL2.

Its subcellular location is the nucleus. It is found in the cytoplasm. Functionally, component of the velvet transcription factor complex that controls sexual/asexual developmental ratio in response to light, promoting sexual development in the darkness while stimulating asexual sporulation under illumination. The velvet complex acts as a global regulator for secondary metabolite gene expression. Controls the expression of the T-toxin gene cluster. Promotes oxidative stress tolerance and acts as a virulence factors during infection. Negatively regulate mycelial pigmentation and controls sexual development, as well as asexual development during vegetative growth. This chain is Developmental and secondary metabolism regulator VEL1, found in Cochliobolus heterostrophus (strain C5 / ATCC 48332 / race O) (Southern corn leaf blight fungus).